Here is a 425-residue protein sequence, read N- to C-terminus: Histidine--tRNA ligase (425 aa).

Belongs to the class-II aminoacyl-tRNA synthetase family. Homodimer.

The protein resides in the cytoplasm. The enzyme catalyses tRNA(His) + L-histidine + ATP = L-histidyl-tRNA(His) + AMP + diphosphate + H(+). In Listeria monocytogenes serovar 1/2a (strain ATCC BAA-679 / EGD-e), this protein is Histidine--tRNA ligase.